Reading from the N-terminus, the 59-residue chain is UPF0391 membrane protein lpl2443 (59 aa).

2 helical membrane passes run 5–25 (ALIF…GIAV) and 30–50 (IAKI…IMGL).

This sequence belongs to the UPF0391 family.

Its subcellular location is the cell membrane. This Legionella pneumophila (strain Lens) protein is UPF0391 membrane protein lpl2443.